Reading from the N-terminus, the 199-residue chain is MYTRPLARLIEELQRLPGIGSKTAQRLALHLINRPAGEIEALAKALLEAKQTVRHCSICFNWSAEDPCEICRSPQRDPSLWCVVADVKDLIAMERTREFKGLYHVLGGLISPMNGIGVDQLHIRELVARVAREKPQELIFAISPSVEGEVTMHVVKDYLKPVAPTLRMTRLAFGLPMGSELEYADEVTLARALEARQEL.

A C4-type zinc finger spans residues 56 to 71; that stretch reads CSICFNWSAEDPCEIC. Positions 79-174 constitute a Toprim domain; it reads SLWCVVADVK…TLRMTRLAFG (96 aa).

This sequence belongs to the RecR family.

May play a role in DNA repair. It seems to be involved in an RecBC-independent recombinational process of DNA repair. It may act with RecF and RecO. The chain is Recombination protein RecR from Synechococcus sp. (strain JA-2-3B'a(2-13)) (Cyanobacteria bacterium Yellowstone B-Prime).